The following is a 540-amino-acid chain: Membrane protein insertase YidC (540 aa).

5 consecutive transmembrane segments (helical) span residues 7–27, 345–365, 415–435, 453–473, and 494–514; these read LLVLALLFISFLVYEQWQMDY, IVSNWGLAIIGVTIVVKGILY, LGGCLPLLIQMPIFIALYWTF, LSAQDPYYILPILMGASMFLL, and PLIFMVFFLWFPAGLVLYWLV.

Belongs to the OXA1/ALB3/YidC family. Type 1 subfamily. As to quaternary structure, interacts with the Sec translocase complex via SecD. Specifically interacts with transmembrane segments of nascent integral membrane proteins during membrane integration.

Its subcellular location is the cell inner membrane. Functionally, required for the insertion and/or proper folding and/or complex formation of integral membrane proteins into the membrane. Involved in integration of membrane proteins that insert both dependently and independently of the Sec translocase complex, as well as at least some lipoproteins. Aids folding of multispanning membrane proteins. This Mannheimia succiniciproducens (strain KCTC 0769BP / MBEL55E) protein is Membrane protein insertase YidC.